The sequence spans 401 residues: LysM domain-containing GPI-anchored protein LYP4 (401 aa).

The N-terminal stretch at Met-1–Ser-23 is a signal peptide. Intrachain disulfides connect Cys-30-Cys-96, Cys-36-Cys-162, Cys-94-Cys-160, and Cys-96-Cys-162. LysM domains lie at Val-106–Val-156 and Leu-175–Val-218. 2 cysteine pairs are disulfide-bonded: Cys-223–Cys-255 and Cys-250–Cys-279. Residue Asn-240 is glycosylated (N-linked (GlcNAc...) asparagine). Residues Asn-281, Asn-288, and Asn-310 are each glycosylated (N-linked (GlcNAc...) asparagine). Ser-373 carries GPI-anchor amidated serine lipidation. Residues Ser-374 to Trp-401 constitute a propeptide, removed in mature form.

As to quaternary structure, interacts with LYP6. Interacts with CEBIP. Interacts with CERK1. As to expression, expressed in roots and leaves.

It localises to the cell membrane. Its function is as follows. Functions in innate immunity. Functions as a pattern recognition receptor (PRR), sensing bacterial peptidoglycan (PGN) and fungal chitin at the cell surface. Involved in resistance against the bacterial pathogen Xanthomonas oryzae pv. oryzae (Xoo) and the fungal pathogen Magnaporthe oryzae. Binds PGN and fungal chitin in vitro. Involved in microbe-associated molecular patterns (MAMPs) perception and participates in the activation of defense genes against the bacterial pathogen Xanthomonas oryzae pv. oryzicola (Xoc) or the fungal pathogen Magnaporthe oryzae. In Oryza sativa subsp. japonica (Rice), this protein is LysM domain-containing GPI-anchored protein LYP4.